Reading from the N-terminus, the 337-residue chain is DNA-directed RNA polymerase subunit alpha (337 aa).

An alpha N-terminal domain (alpha-NTD) region spans residues 1–233 (MVREEVVGST…DLFIPFLHAE (233 aa)). Positions 265–337 (KEIALKCIFI…FAIDLPKNKF (73 aa)) are alpha C-terminal domain (alpha-CTD).

It belongs to the RNA polymerase alpha chain family. In plastids the minimal PEP RNA polymerase catalytic core is composed of four subunits: alpha, beta, beta', and beta''. When a (nuclear-encoded) sigma factor is associated with the core the holoenzyme is formed, which can initiate transcription.

It is found in the plastid. The protein resides in the chloroplast. It carries out the reaction RNA(n) + a ribonucleoside 5'-triphosphate = RNA(n+1) + diphosphate. DNA-dependent RNA polymerase catalyzes the transcription of DNA into RNA using the four ribonucleoside triphosphates as substrates. The sequence is that of DNA-directed RNA polymerase subunit alpha from Acorus gramineus (Dwarf sweet flag).